We begin with the raw amino-acid sequence, 522 residues long: Probable protein kinase UbiB (522 aa).

One can recognise a Protein kinase domain in the interval Ser119 to Thr496. ATP is bound by residues Val125–Val133 and Lys147. Asp282 (proton acceptor) is an active-site residue. Residues Leu494–Ile514 form a helical membrane-spanning segment.

This sequence belongs to the ABC1 family. UbiB subfamily.

The protein localises to the cell inner membrane. It functions in the pathway cofactor biosynthesis; ubiquinone biosynthesis [regulation]. Its function is as follows. Is probably a protein kinase regulator of UbiI activity which is involved in aerobic coenzyme Q (ubiquinone) biosynthesis. In Leptothrix cholodnii (strain ATCC 51168 / LMG 8142 / SP-6) (Leptothrix discophora (strain SP-6)), this protein is Probable protein kinase UbiB.